The chain runs to 446 residues: Transcriptional regulator STERILE APETALA (446 aa).

Positions 1 to 10 (MSTSSSSSDN) are enriched in low complexity. The interval 1–32 (MSTSSSSSDNGAGGSGGVFEAPSPSRPRRGAN) is disordered.

As to expression, expressed in inflorescence and floral meristems, young floral organ primordia, and later in ovule primordia.

Its subcellular location is the nucleus. Its function is as follows. Transcriptional regulator involved in the specification of floral identity. Acts as A class cadastral protein by repressing the C class floral homeotic gene AGAMOUS in the external flower organs in association with APETALA2 and other repressors. Is required to maintain floral meristem identity in concert with AGAMOUS. Also interacts with APETALA2 to ensure the normal development of ovule. This Arabidopsis thaliana (Mouse-ear cress) protein is Transcriptional regulator STERILE APETALA (SAP).